Consider the following 78-residue polypeptide: Pigment-dispersing hormone peptides (78 aa).

The N-terminal stretch at 1–22 (MRSAVIVTMLVVVALAALLTQG) is a signal peptide. A75 is modified (alanine amide).

This sequence belongs to the arthropod PDH family. Expressed in eyestalk tissue and cerebral ganglia.

The protein resides in the secreted. In terms of biological role, the pigment-dispersing hormone causes the migration of the distal retinal pigment into the proximal end of the pigment chromatophore cells and thus decreases the amount of light entering the retinulas. May also function as a neurotransmitter and/or neuromodulator. The sequence is that of Pigment-dispersing hormone peptides from Carcinus maenas (Common shore crab).